Reading from the N-terminus, the 73-residue chain is MKAGIHPDYHMIKVVMTDGTEYETRSTWGSEGAVMNLEIDSKSHPAWTGGNQQLMDRGGRVSKFNKRFGGLGL.

The protein belongs to the bacterial ribosomal protein bL31 family. Type A subfamily. As to quaternary structure, part of the 50S ribosomal subunit.

Binds the 23S rRNA. This chain is Large ribosomal subunit protein bL31, found in Rhizobium etli (strain CIAT 652).